A 312-amino-acid polypeptide reads, in one-letter code: MGDAGLIVIGGATATGKTALAIALAQQLNSVILSADSRQVYRGFDIGTAKPTPAQQQQVRHHLIDICDPRETLTLAIYQAKAQALIAHYHAQGITPLLVGGTGLYIRSITQGLTMPQVPPQPHLRAQLMALGQQECYQWLQQVDPVAAQRIHAHDQVRTLRALEVYYTTGVPLSQQQRREPPPYRIWYFALTGGDRQQERCRIEARTQEMLAMGWLDEIQQLQRQYGEDLPLLDTLGYREMRQYLRGEVTLAEAIALTVQHTQQFAKRQRTWFRAEPDIHWLQATTLEAQLAEIQAQFTLCPKTTATKRRMS.

11–18 (GATATGKT) provides a ligand contact to ATP. Residue 13 to 18 (TATGKT) participates in substrate binding. The interaction with substrate tRNA stretch occupies residues 36-39 (DSRQ).

The protein belongs to the IPP transferase family. Monomer. Requires Mg(2+) as cofactor.

It catalyses the reaction adenosine(37) in tRNA + dimethylallyl diphosphate = N(6)-dimethylallyladenosine(37) in tRNA + diphosphate. Catalyzes the transfer of a dimethylallyl group onto the adenine at position 37 in tRNAs that read codons beginning with uridine, leading to the formation of N6-(dimethylallyl)adenosine (i(6)A). The polypeptide is tRNA dimethylallyltransferase (Thermosynechococcus vestitus (strain NIES-2133 / IAM M-273 / BP-1)).